A 195-amino-acid polypeptide reads, in one-letter code: Imidazoleglycerol-phosphate dehydratase (195 aa).

Belongs to the imidazoleglycerol-phosphate dehydratase family.

The protein resides in the cytoplasm. The enzyme catalyses D-erythro-1-(imidazol-4-yl)glycerol 3-phosphate = 3-(imidazol-4-yl)-2-oxopropyl phosphate + H2O. It participates in amino-acid biosynthesis; L-histidine biosynthesis; L-histidine from 5-phospho-alpha-D-ribose 1-diphosphate: step 6/9. This is Imidazoleglycerol-phosphate dehydratase from Desulfosudis oleivorans (strain DSM 6200 / JCM 39069 / Hxd3) (Desulfococcus oleovorans).